A 529-amino-acid chain; its full sequence is Lanosterol 14-alpha demethylase (529 aa).

Cys-468 provides a ligand contact to heme.

This sequence belongs to the cytochrome P450 family. The cofactor is heme.

Its subcellular location is the membrane. It catalyses the reaction a 14alpha-methyl steroid + 3 reduced [NADPH--hemoprotein reductase] + 3 O2 = a Delta(14) steroid + formate + 3 oxidized [NADPH--hemoprotein reductase] + 4 H2O + 4 H(+). The catalysed reaction is a 14alpha-methyl steroid + reduced [NADPH--hemoprotein reductase] + O2 = a 14alpha-hydroxymethyl steroid + oxidized [NADPH--hemoprotein reductase] + H2O + H(+). The enzyme catalyses a 14alpha-hydroxymethyl steroid + reduced [NADPH--hemoprotein reductase] + O2 = a 14alpha-formyl steroid + oxidized [NADPH--hemoprotein reductase] + 2 H2O + H(+). It carries out the reaction a 14alpha-formyl steroid + reduced [NADPH--hemoprotein reductase] + O2 = a Delta(14) steroid + formate + oxidized [NADPH--hemoprotein reductase] + H2O + 2 H(+). It catalyses the reaction lanosterol + 3 reduced [NADPH--hemoprotein reductase] + 3 O2 = 4,4-dimethyl-5alpha-cholesta-8,14,24-trien-3beta-ol + formate + 3 oxidized [NADPH--hemoprotein reductase] + 4 H2O + 4 H(+). The catalysed reaction is lanosterol + reduced [NADPH--hemoprotein reductase] + O2 = 32-hydroxylanosterol + oxidized [NADPH--hemoprotein reductase] + H2O + H(+). The enzyme catalyses 32-hydroxylanosterol + reduced [NADPH--hemoprotein reductase] + O2 = 32-oxolanosterol + oxidized [NADPH--hemoprotein reductase] + 2 H2O + H(+). It carries out the reaction 32-oxolanosterol + reduced [NADPH--hemoprotein reductase] + O2 = 4,4-dimethyl-5alpha-cholesta-8,14,24-trien-3beta-ol + formate + oxidized [NADPH--hemoprotein reductase] + H2O + 2 H(+). It catalyses the reaction eburicol + 3 reduced [NADPH--hemoprotein reductase] + 3 O2 = 14-demethyleburicol + formate + 3 oxidized [NADPH--hemoprotein reductase] + 4 H2O + 4 H(+). The catalysed reaction is eburicol + reduced [NADPH--hemoprotein reductase] + O2 = 32-hydroxyeburicol + oxidized [NADPH--hemoprotein reductase] + H2O + H(+). The enzyme catalyses 32-hydroxyeburicol + reduced [NADPH--hemoprotein reductase] + O2 = 32-oxoeburicol + oxidized [NADPH--hemoprotein reductase] + 2 H2O + H(+). It carries out the reaction 32-oxoeburicol + reduced [NADPH--hemoprotein reductase] + O2 = 14-demethyleburicol + formate + oxidized [NADPH--hemoprotein reductase] + H2O + 2 H(+). It functions in the pathway steroid biosynthesis; zymosterol biosynthesis; zymosterol from lanosterol: step 1/6. In terms of biological role, sterol 14alpha-demethylase that plays a critical role in the third module of ergosterol biosynthesis pathway, being ergosterol the major sterol component in fungal membranes that participates in a variety of functions. The third module or late pathway involves the ergosterol synthesis itself through consecutive reactions that mainly occur in the endoplasmic reticulum (ER) membrane. In filamentous fungi, during the initial step of this module, lanosterol (lanosta-8,24-dien-3beta-ol) can be metabolized to eburicol. Sterol 14alpha-demethylase catalyzes the three-step oxidative removal of the 14alpha-methyl group (C-32) of both these sterols in the form of formate, and converts eburicol and lanosterol to 14-demethyleburicol (4,4,24-trimethylergosta-8,14,24(28)-trienol) and 4,4-dimethyl-5alpha-cholesta-8,14,24-trien-3beta-ol, respectively, which are further metabolized by other enzymes in the pathway to ergosterol. Can also use substrates not intrinsic to fungi, such as 24,25-dihydrolanosterol (DHL), producing 4,4-dimethyl-8,14-cholestadien-3-beta-ol, but at lower rates than the endogenous substrates. The protein is Lanosterol 14-alpha demethylase (ERG11) of Eremothecium gossypii (strain ATCC 10895 / CBS 109.51 / FGSC 9923 / NRRL Y-1056) (Yeast).